The primary structure comprises 308 residues: Transcription initiation factor TFIID subunit 8 (308 aa).

The tract at residues 1–29 is disordered; sequence MADTAAGPGGSGTRPGSKQSTNPADNYHL. Position 2 is an N-acetylalanine (Ala2). The span at 14–24 shows a compositional bias: polar residues; sequence RPGSKQSTNPA. Positions 35 to 102 constitute a Histone-fold domain; the sequence is LQVVVSSLLT…VTLVEMGFNV (68 aa). Thr128 carries the post-translational modification Phosphothreonine. Acidic residues predominate over residues 235-248; sequence MEETDSSEQEEQTD. The disordered stretch occupies residues 235 to 308; sequence MEETDSSEQE…PKIRRKKSLS (74 aa). The span at 268–281 shows a compositional bias: low complexity; the sequence is ASVLQQSSSLSGSR. Position 269 is a phosphoserine (Ser269). The Nuclear localization signal motif lies at 292 to 305; that stretch reads YLRPVKKPKIRRKK. Over residues 295 to 308 the composition is skewed to basic residues; sequence PVKKPKIRRKKSLS.

This sequence belongs to the TAF8 family. Component of the TFIID basal transcription factor complex, composed of TATA-box-binding protein TBP, and a number of TBP-associated factors (TAFs), including TAF1, TAF2, TAF3, TAF4, TAF5, TAF6, TAF7, TAF8, TAF9, TAF10, TAF11, TAF12 and TAF13. Interacts with TBP, TAF1, TAF6, TAF10, TAF11 and TAF13. Component also of a small TAF complex (SMAT) containing TAF8, TAF10 and SUPT7L. Forms a heterodimer with TAF10. Interaction with TAF10 is mediated mainly via its histone fold domain while interaction with SUPT7L is via its C-terminal region. In terms of tissue distribution, low level of expression throughout the brain with slightly higher expression in the hippocampus.

It localises to the nucleus. Its subcellular location is the cytoplasm. The TFIID basal transcription factor complex plays a major role in the initiation of RNA polymerase II (Pol II)-dependent transcription. TFIID recognizes and binds promoters with or without a TATA box via its subunit TBP, a TATA-box-binding protein, and promotes assembly of the pre-initiation complex (PIC). The TFIID complex consists of TBP and TBP-associated factors (TAFs), including TAF1, TAF2, TAF3, TAF4, TAF5, TAF6, TAF7, TAF8, TAF9, TAF10, TAF11, TAF12 and TAF13. The TFIID complex structure can be divided into 3 modules TFIID-A, TFIID-B, and TFIID-C. TAF8 is involved in forming the TFIID-B module, together with TAF5. Mediates both basal and activator-dependent transcription. Plays a role in the differentiation of preadipocyte fibroblasts to adipocytes, however, does not seem to play a role in differentiation of myoblasts. Required for the integration of TAF10 in the TAF complex. May be important for survival of cells of the inner cell mass which constitute the pluripotent cell population of the early embryo. This is Transcription initiation factor TFIID subunit 8 (Taf8) from Mus musculus (Mouse).